The chain runs to 314 residues: Methionyl-tRNA formyltransferase (314 aa).

113-116 contacts (6S)-5,6,7,8-tetrahydrofolate; that stretch reads SLLP.

This sequence belongs to the Fmt family.

It catalyses the reaction L-methionyl-tRNA(fMet) + (6R)-10-formyltetrahydrofolate = N-formyl-L-methionyl-tRNA(fMet) + (6S)-5,6,7,8-tetrahydrofolate + H(+). In terms of biological role, attaches a formyl group to the free amino group of methionyl-tRNA(fMet). The formyl group appears to play a dual role in the initiator identity of N-formylmethionyl-tRNA by promoting its recognition by IF2 and preventing the misappropriation of this tRNA by the elongation apparatus. The sequence is that of Methionyl-tRNA formyltransferase from Serratia proteamaculans (strain 568).